Reading from the N-terminus, the 497-residue chain is MAKYIIALDQGTTSSRAIIFNHQGEVINISQKDFPQHFPQLGWVEHSPDAIWSTQLSVMQEAIAKARIREHDIAAIGITNQRETTMLWNRKTGEPVYQAIVWQDRRTARYCDTLKEEYGAMIRQKTGLIIDAYFSASKIHWILENVSGARELAEKGDLAFGTVDTWLIWCLTEGKVHVTDPSNASRTMLFNIHTMQWDDELLALFNIPKAILPEVKSSSEIYGYVDSRYIQGGKVPIAGIAGDQQAALFGQMCTKKGMMKNTYGTGCFLLMNTGDKIVTSNNNLLSTVAWKIGDKVTYALEGGVFVGGAVIQWVRDGLRIIRTADAINSLADTVEDNGGVYFVPCMTGMGAPYWDQYARGTIIGITRGTTDAHIARATLEGIALQVHDIVRAMEKDVGEATKEFRVDGGASASNLLMQIQSDIFQFDIVRPKVLETTALGAAYLAGLAIGFWQNTDEIAQQWQQDCTFSPKMPPEKVAHILRYWNKAVKAAQHWIEE.

ADP is bound at residue Thr12. ATP is bound by residues Thr12, Thr13, and Ser14. Thr12 contacts sn-glycerol 3-phosphate. Residue Arg16 coordinates ADP. Sn-glycerol 3-phosphate-binding residues include Arg82, Glu83, Tyr133, and Asp243. Residues Arg82, Glu83, Tyr133, Asp243, and Gln244 each contribute to the glycerol site. Positions 265 and 308 each coordinate ADP. ATP-binding residues include Thr265, Gly308, Gln312, and Gly409. An ADP-binding site is contributed by Gly409.

It belongs to the FGGY kinase family.

The catalysed reaction is glycerol + ATP = sn-glycerol 3-phosphate + ADP + H(+). It functions in the pathway polyol metabolism; glycerol degradation via glycerol kinase pathway; sn-glycerol 3-phosphate from glycerol: step 1/1. Inhibited by fructose 1,6-bisphosphate (FBP). Functionally, key enzyme in the regulation of glycerol uptake and metabolism. Catalyzes the phosphorylation of glycerol to yield sn-glycerol 3-phosphate. This chain is Glycerol kinase, found in Dichelobacter nodosus (strain VCS1703A).